The primary structure comprises 140 residues: Profilin (140 aa).

Ser-2 is modified (N-acetylserine).

Belongs to the profilin family. Occurs in many kinds of cells as a complex with monomeric actin in a 1:1 ratio.

It localises to the cytoplasm. The protein localises to the cytoskeleton. In terms of biological role, binds to actin and affects the structure of the cytoskeleton. At high concentrations, profilin prevents the polymerization of actin, whereas it enhances it at low concentrations. By binding to PIP2, it inhibits the formation of IP3 and DG. The protein is Profilin of Clypeaster japonicus (Sand dollar).